Reading from the N-terminus, the 228-residue chain is Ankyrin repeat domain-containing protein 46 (228 aa).

ANK repeat units follow at residues 11 to 40 (QTNV…DPNI), 44 to 74 (RGRT…PLAT), 77 to 103 (QGNT…KIDI), and 107 to 138 (QGAT…EVKG). The helical transmembrane segment at 195–215 (VLLLILVIALLSLGIAYYVSG) threads the bilayer.

Its subcellular location is the membrane. This chain is Ankyrin repeat domain-containing protein 46 (Ankrd46), found in Rattus norvegicus (Rat).